Here is a 221-residue protein sequence, read N- to C-terminus: uncharacterized protein (221 aa).

The first 30 residues, 1–30 (MAKFNNNILLIILIIVILFIIFYFLNKNNQ), serve as a signal peptide directing secretion.

Its subcellular location is the virion. This is an uncharacterized protein from Acanthamoeba polyphaga mimivirus (APMV).